Reading from the N-terminus, the 340-residue chain is GTP 3',8-cyclase (340 aa).

Residues 20–246 (RFERQYVYLR…PKALSDGPAK (227 aa)) form the Radical SAM core domain. Arg29 lines the GTP pocket. [4Fe-4S] cluster contacts are provided by Cys36 and Cys40. Tyr42 is a binding site for S-adenosyl-L-methionine. Residue Cys43 coordinates [4Fe-4S] cluster. Arg79 is a binding site for GTP. Residue Gly83 coordinates S-adenosyl-L-methionine. Thr110 contacts GTP. Ser134 lines the S-adenosyl-L-methionine pocket. Lys171 is a GTP binding site. Met205 contacts S-adenosyl-L-methionine. [4Fe-4S] cluster is bound by residues Cys268 and Cys271. GTP is bound at residue 273–275 (RLR). Position 285 (Cys285) interacts with [4Fe-4S] cluster.

It belongs to the radical SAM superfamily. MoaA family. In terms of assembly, monomer and homodimer. The cofactor is [4Fe-4S] cluster.

It catalyses the reaction GTP + AH2 + S-adenosyl-L-methionine = (8S)-3',8-cyclo-7,8-dihydroguanosine 5'-triphosphate + 5'-deoxyadenosine + L-methionine + A + H(+). The protein operates within cofactor biosynthesis; molybdopterin biosynthesis. Functionally, catalyzes the cyclization of GTP to (8S)-3',8-cyclo-7,8-dihydroguanosine 5'-triphosphate. In Actinobacillus pleuropneumoniae serotype 5b (strain L20), this protein is GTP 3',8-cyclase.